We begin with the raw amino-acid sequence, 187 residues long: Aminodeoxychorismate synthase component 2 (187 aa).

The Glutamine amidotransferase type-1 domain occupies 1–187; sequence MILLIDNYDS…HQLLANFLHR (187 aa). Active-site residues include Cys79, His168, and Glu170.

As to quaternary structure, monomer. Heterodimer consisting of two non-identical subunits: a glutamine amidotransferase subunit (PabA) and a aminodeoxychorismate synthase subunit (PabB).

The catalysed reaction is chorismate + L-glutamine = 4-amino-4-deoxychorismate + L-glutamate. Its pathway is cofactor biosynthesis; tetrahydrofolate biosynthesis; 4-aminobenzoate from chorismate: step 1/2. With respect to regulation, inhibited by 6-diazo-5-oxo-L-norleucine (DON). The inhibition is competitive with glutamine, but uncompetitive with chorismate. In terms of biological role, part of a heterodimeric complex that catalyzes the two-step biosynthesis of 4-amino-4-deoxychorismate (ADC), a precursor of p-aminobenzoate (PABA) and tetrahydrofolate. In the first step, a glutamine amidotransferase (PabA) generates ammonia as a substrate that, along with chorismate, is used in the second step, catalyzed by aminodeoxychorismate synthase (PabB) to produce ADC. PabA converts glutamine into glutamate only in the presence of stoichiometric amounts of PabB. In Escherichia coli (strain K12), this protein is Aminodeoxychorismate synthase component 2.